The sequence spans 164 residues: uncharacterized protein (164 aa).

CBS domains follow at residues 9-66 (ATTK…DIDS) and 72-128 (MTKD…VHTM).

This is an uncharacterized protein from Acidianus ambivalens (Desulfurolobus ambivalens).